The primary structure comprises 353 residues: Photosystem II D2 protein (353 aa).

At T2 the chain carries N-acetylthreonine. T2 bears the Phosphothreonine mark. The helical transmembrane segment at 41-61 threads the bilayer; that stretch reads CAYFALGGWFTGTTFVTSWYT. H118 is a binding site for chlorophyll a. The helical transmembrane segment at 125–141 threads the bilayer; sequence GFMLRQFELARSVQLRP. Pheophytin a-binding residues include Q130 and N143. The helical transmembrane segment at 153–166 threads the bilayer; sequence VFVSVFLIYPLGQS. Residue H198 coordinates chlorophyll a. Residues 208–228 traverse the membrane as a helical segment; that stretch reads AALLCAIHGATVENTLFEDGD. H215 and F262 together coordinate a plastoquinone. H215 contacts Fe cation. H269 contacts Fe cation. Residues 279–295 form a helical membrane-spanning segment; sequence GLWMSALGVVGLALNLR.

It belongs to the reaction center PufL/M/PsbA/D family. As to quaternary structure, PSII is composed of 1 copy each of membrane proteins PsbA, PsbB, PsbC, PsbD, PsbE, PsbF, PsbH, PsbI, PsbJ, PsbK, PsbL, PsbM, PsbT, PsbX, PsbY, PsbZ, Psb30/Ycf12, at least 3 peripheral proteins of the oxygen-evolving complex and a large number of cofactors. It forms dimeric complexes. Requires The D1/D2 heterodimer binds P680, chlorophylls that are the primary electron donor of PSII, and subsequent electron acceptors. It shares a non-heme iron and each subunit binds pheophytin, quinone, additional chlorophylls, carotenoids and lipids. There is also a Cl(-1) ion associated with D1 and D2, which is required for oxygen evolution. The PSII complex binds additional chlorophylls, carotenoids and specific lipids. as cofactor.

The protein localises to the plastid. The protein resides in the chloroplast thylakoid membrane. It catalyses the reaction 2 a plastoquinone + 4 hnu + 2 H2O = 2 a plastoquinol + O2. Functionally, photosystem II (PSII) is a light-driven water:plastoquinone oxidoreductase that uses light energy to abstract electrons from H(2)O, generating O(2) and a proton gradient subsequently used for ATP formation. It consists of a core antenna complex that captures photons, and an electron transfer chain that converts photonic excitation into a charge separation. The D1/D2 (PsbA/PsbD) reaction center heterodimer binds P680, the primary electron donor of PSII as well as several subsequent electron acceptors. D2 is needed for assembly of a stable PSII complex. This is Photosystem II D2 protein from Coffea arabica (Arabian coffee).